Here is a 436-residue protein sequence, read N- to C-terminus: UPF0597 protein YhaM (436 aa).

It belongs to the UPF0597 family.

This chain is UPF0597 protein YhaM, found in Salmonella paratyphi A (strain ATCC 9150 / SARB42).